Here is a 106-residue protein sequence, read N- to C-terminus: Urease subunit beta (106 aa).

Belongs to the urease beta subunit family. In terms of assembly, heterotrimer of UreA (gamma), UreB (beta) and UreC (alpha) subunits. Three heterotrimers associate to form the active enzyme.

It is found in the cytoplasm. It carries out the reaction urea + 2 H2O + H(+) = hydrogencarbonate + 2 NH4(+). It functions in the pathway nitrogen metabolism; urea degradation; CO(2) and NH(3) from urea (urease route): step 1/1. This Synechococcus sp. (strain CC9605) protein is Urease subunit beta.